The primary structure comprises 156 residues: Transcription elongation factor GreA (156 aa).

Residues 1-32 (MKKVRLTREGYEKLKKELEDLKRKFMYEISER) adopt a coiled-coil conformation.

The protein belongs to the GreA/GreB family.

Necessary for efficient RNA polymerase transcription elongation past template-encoded arresting sites. The arresting sites in DNA have the property of trapping a certain fraction of elongating RNA polymerases that pass through, resulting in locked ternary complexes. Cleavage of the nascent transcript by cleavage factors such as GreA or GreB allows the resumption of elongation from the new 3'terminus. GreA releases sequences of 2 to 3 nucleotides. The chain is Transcription elongation factor GreA from Thermotoga sp. (strain RQ2).